Consider the following 236-residue polypeptide: Small ribosomal subunit protein uS2c (236 aa).

Belongs to the universal ribosomal protein uS2 family.

The protein resides in the plastid. The protein localises to the chloroplast. This Ceratophyllum demersum (Rigid hornwort) protein is Small ribosomal subunit protein uS2c (rps2).